The following is a 74-amino-acid chain: Pelophylaxin-3 (74 aa).

The first 22 residues, 1-22, serve as a signal peptide directing secretion; sequence MFTLKKSLLLVFFLGTISLSLC. A propeptide spanning residues 23-39 is cleaved from the precursor; the sequence is EDERNADEDDGEMTEEV. Cys68 and Cys74 are joined by a disulfide.

As to expression, expressed by the skin glands.

The protein localises to the secreted. Antimicrobial peptide. The sequence is that of Pelophylaxin-3 from Pelophylax fukienensis (Fukien gold-striped pond frog).